The following is a 224-amino-acid chain: Flagellar L-ring protein (224 aa).

The first 15 residues, 1 to 15 (MLRYLMVGSLLVLAG), serve as a signal peptide directing secretion. A lipid anchor (N-palmitoyl cysteine) is attached at Cys-16. Residue Cys-16 is the site of S-diacylglycerol cysteine attachment.

Belongs to the FlgH family. In terms of assembly, the basal body constitutes a major portion of the flagellar organelle and consists of four rings (L,P,S, and M) mounted on a central rod.

The protein localises to the cell outer membrane. The protein resides in the bacterial flagellum basal body. Functionally, assembles around the rod to form the L-ring and probably protects the motor/basal body from shearing forces during rotation. This chain is Flagellar L-ring protein, found in Shewanella amazonensis (strain ATCC BAA-1098 / SB2B).